Here is a 109-residue protein sequence, read N- to C-terminus: Nucleoid-associated protein Sama_1311 (109 aa).

The protein belongs to the YbaB/EbfC family. In terms of assembly, homodimer.

Its subcellular location is the cytoplasm. It is found in the nucleoid. Functionally, binds to DNA and alters its conformation. May be involved in regulation of gene expression, nucleoid organization and DNA protection. This is Nucleoid-associated protein Sama_1311 from Shewanella amazonensis (strain ATCC BAA-1098 / SB2B).